The primary structure comprises 82 residues: Diptericin-A (82 aa).

2 disordered regions span residues 1 to 32 (DEKPKLILPTPAPPNLPQLVGGGGGNRKDGFG) and 45 to 69 (DNGGHSIGVSPGYSQHLPGPYGNSR). F82 carries the phenylalanine amide modification.

It belongs to the attacin/sarcotoxin-2 family.

Its subcellular location is the secreted. In terms of biological role, antimicrobial peptide required to resist Gram-negative bacterial infections, regulated by Dredd. The polypeptide is Diptericin-A (Protophormia terraenovae (Northern blowfly)).